The chain runs to 151 residues: Neuroglobin (151 aa).

Residues 1–149 (MERPEHELIR…VVQAMSRGWN (149 aa)) form the Globin domain. Residues H64 and H96 each contribute to the heme b site.

Belongs to the globin family. As to quaternary structure, monomer. Homodimer and homotetramer; disulfide-linked. Mainly monomeric but also detected as part of homodimers and homotetramers. Interacts with 14-3-3 proteins; regulates the phosphorylation of NGB. Could interact (ferrous form) with G-alpha(i) proteins (GTP-bound form). Post-translationally, phosphorylated during hypoxia by ERK1/ERK2. Phosphorylation regulates the heme pocket hexacoordination preventing the association of His-64 with the heme metal center. Thereby, promotes the access of dioxygen and nitrite to the heme and stimulates the nitrite reductase activity. Phosphorylation during hypoxia is stabilized by 14-3-3 proteins.

It localises to the cytoplasm. It is found in the cytosol. The protein localises to the mitochondrion matrix. The catalysed reaction is Fe(III)-heme b-[protein] + nitric oxide + H2O = Fe(II)-heme b-[protein] + nitrite + 2 H(+). In terms of biological role, monomeric globin with a bis-histidyl six-coordinate heme-iron atom through which it can bind dioxygen, carbon monoxide and nitric oxide. Could help transport oxygen and increase its availability to the metabolically active neuronal tissues, though its low quantity in tissues as well as its high affinity for dioxygen, which may limit its oxygen-releasing ability, argue against it. The ferrous/deoxygenated form exhibits a nitrite reductase activity and it could produce nitric oxide which in turn inhibits cellular respiration in response to hypoxia. In its ferrous/deoxygenated state, it may also exhibit GDI (Guanine nucleotide Dissociation Inhibitor) activity toward heterotrimeric G-alpha proteins, thereby regulating signal transduction to facilitate neuroprotective responses in the wake of hypoxia and associated oxidative stress. This is Neuroglobin from Sus scrofa (Pig).